The chain runs to 1016 residues: Enhancer of polycomb-like protein 1 (1016 aa).

Disordered stretches follow at residues 1–50, 96–119, 450–488, 499–518, and 842–1016; these read MAIH…NDLE, LLGS…DASV, KEED…TIGT, GQVH…VKLP, and ARMR…PNRK. Residues 35-50 show a composition bias toward polar residues; sequence YKQSDLPTLNASNDLE. Composition is skewed to basic and acidic residues over residues 103-116 and 457-473; these read DGDK…KKTD and ESSK…DSSR. A compositionally biased stretch (polar residues) spans 475-488; that stretch reads GSATSMPGSATIGT. Residues 842-883 show a composition bias toward low complexity; that stretch reads ARMRTLQQQQRNNKQQAAGQSSGSSSASLGSNTNSNSSISGQ. Residues 884 to 902 are compositionally biased toward polar residues; the sequence is ADQGQTNLTNSGITRQGGA. A compositionally biased stretch (low complexity) spans 904–923; the sequence is VNGSQTSTTNNTRSSVSGGS. The segment covering 928–956 has biased composition (polar residues); it reads LPTQSSQRSNTNSPLLASQPQGYSQQQKF. Residues 960–971 are compositionally biased toward low complexity; it reads PPTSQSQSQSPT. The segment covering 976-994 has biased composition (polar residues); it reads QLQTSKMYNKHGSNITPSN.

This sequence belongs to the enhancer of polycomb family. Component of the NuA4 histone acetyltransferase complex.

It is found in the nucleus. Functionally, component of the NuA4 histone acetyltransferase complex which is involved in transcriptional activation of selected genes principally by acetylation of nucleosomal histone H4 and H2A. The NuA4 complex is also involved in DNA repair. Involved in gene silencing by neighboring heterochromatin, blockage of the silencing spreading along the chromosome, and required for cell cycle progression through G2/M. The polypeptide is Enhancer of polycomb-like protein 1 (EPL1) (Debaryomyces hansenii (strain ATCC 36239 / CBS 767 / BCRC 21394 / JCM 1990 / NBRC 0083 / IGC 2968) (Yeast)).